The following is a 303-amino-acid chain: Ribonuclease HIII (303 aa).

Residues 89–303 (WSVLGSDEVG…ANTKKAERLL (215 aa)) form the RNase H type-2 domain. Residues Asp95, Glu96, and Asp199 each coordinate a divalent metal cation.

Belongs to the RNase HII family. RnhC subfamily. It depends on Mn(2+) as a cofactor. Requires Mg(2+) as cofactor.

Its subcellular location is the cytoplasm. The catalysed reaction is Endonucleolytic cleavage to 5'-phosphomonoester.. Its function is as follows. Endonuclease that specifically degrades the RNA of RNA-DNA hybrids. The chain is Ribonuclease HIII from Leuconostoc mesenteroides subsp. mesenteroides (strain ATCC 8293 / DSM 20343 / BCRC 11652 / CCM 1803 / JCM 6124 / NCDO 523 / NBRC 100496 / NCIMB 8023 / NCTC 12954 / NRRL B-1118 / 37Y).